A 206-amino-acid chain; its full sequence is Ribosomal RNA small subunit methyltransferase G (206 aa).

Residues Gly73, Leu78, 124–125 (VE), and Arg139 contribute to the S-adenosyl-L-methionine site.

It belongs to the methyltransferase superfamily. RNA methyltransferase RsmG family.

Its subcellular location is the cytoplasm. It carries out the reaction guanosine(527) in 16S rRNA + S-adenosyl-L-methionine = N(7)-methylguanosine(527) in 16S rRNA + S-adenosyl-L-homocysteine. In terms of biological role, specifically methylates the N7 position of guanine in position 527 of 16S rRNA. In Yersinia pseudotuberculosis serotype O:3 (strain YPIII), this protein is Ribosomal RNA small subunit methyltransferase G.